Consider the following 308-residue polypeptide: Ribosomal RNA small subunit methyltransferase H (308 aa).

S-adenosyl-L-methionine-binding positions include 32 to 34 (AGH), Asp51, Phe78, Asp99, and Gln106.

It belongs to the methyltransferase superfamily. RsmH family.

It localises to the cytoplasm. It carries out the reaction cytidine(1402) in 16S rRNA + S-adenosyl-L-methionine = N(4)-methylcytidine(1402) in 16S rRNA + S-adenosyl-L-homocysteine + H(+). Its function is as follows. Specifically methylates the N4 position of cytidine in position 1402 (C1402) of 16S rRNA. This chain is Ribosomal RNA small subunit methyltransferase H, found in Mesoplasma florum (strain ATCC 33453 / NBRC 100688 / NCTC 11704 / L1) (Acholeplasma florum).